The chain runs to 148 residues: Protein SOB FIVE-LIKE 1 (148 aa).

Residues 1-10 (MESPRNHGGS) show a composition bias toward basic and acidic residues. 2 disordered regions span residues 1-20 (MESPRNHGGSEEEEYSSCES) and 33-148 (NDQS…SKTK). The SOFL-A motif lies at 20–25 (SGWTMY). Residues 54 to 76 (DGYENDDGDTSDDGGDEESDDSM) show a composition bias toward acidic residues. The SOFL-B motif lies at 75-84 (SMASDASSGP). Over residues 91–101 (HINKHAARKNG) the composition is skewed to basic residues. A compositionally biased stretch (basic and acidic residues) spans 111–128 (QHTEKTISNEGEKSDLKA).

It belongs to the SOFL plant protein family. In terms of tissue distribution, predominantly expressed in the vascular tissues of seedlings, developing leaves, flowers and siliques, but barely detectable in roots and stems.

The protein resides in the cytoplasm. Its subcellular location is the nucleus. Functionally, involved in cytokinin-mediated development. Together with SOFL2, triggers the endogenous content of specific bioactive cytokinins derived from the biosynthetic intermediates trans-zeatin riboside monophosphate (tZRMP) and N(6)-(Delta(2)-isopentenyl)adenosine monophosphate (iPRMP) such as N-glucosides trans-zeatin 7-glucoside (tZ7G), cis-zeatin 7-glucoside (cZ7G) and N(6)-(Delta(2)-isopentenyl)adenine 7-glucoside (iP7G). In Arabidopsis thaliana (Mouse-ear cress), this protein is Protein SOB FIVE-LIKE 1.